Reading from the N-terminus, the 68-residue chain is MDPETCPCPTGGSCTCSDPCKCEGCTCASSKKSCCSCCPAECEKCAKDCVCKGGEGAEAEEKKCSCCQ.

Met-1 is modified (N-acetylmethionine). Residues 1–30 (MDPETCPCPTGGSCTCSDPCKCEGCTCASS) form a beta region. A divalent metal cation is bound by residues Cys-6, Cys-8, Cys-14, Cys-16, Cys-20, Cys-22, Cys-25, and Cys-27. Residues 31-68 (KKSCCSCCPAECEKCAKDCVCKGGEGAEAEEKKCSCCQ) are alpha. The residue at position 33 (Ser-33) is a Phosphoserine. The a divalent metal cation site is built by Cys-34, Cys-35, Cys-37, Cys-38, Cys-42, Cys-45, Cys-49, Cys-51, Cys-64, Cys-66, and Cys-67.

This sequence belongs to the metallothionein superfamily. Type 1 family.

Binds heavy metals. Contains five zinc and one copper atoms per polypeptide chain and only a negligible amount of cadmium. The protein is Metallothionein-3 (MT3) of Bos mutus grunniens (Wild yak).